A 123-amino-acid polypeptide reads, in one-letter code: Sterol carrier protein 2 (123 aa).

The 98-residue stretch at Lys-16–Thr-113 folds into the SCP2 domain. The Microbody targeting signal signature appears at Ser-121 to Leu-123.

In terms of tissue distribution, expressed in most tissues including seedlings, cotyledons, inflorescence, leaves, stems, roots, siliques and flower buds, with the highest levels in floral tissues and in maturing seeds.

The protein resides in the peroxisome. In terms of biological role, enhances the transfer of lipids between membranes in vitro. Active on phosphatidylcholine (PC), 1-palmitoyl 2-oleoyl phosphatidylcholine (POPC) and ergosterol, and, to a lower extent, dimyristoyl phosphatidic acid, stigmasterol, desmosterol, beta-sitosterol and steryl glucoside. Inactive or poorly active on palmitic acid, stearoyl-coenzyme A, cholesterol, glucosylceramide and ceramide. Required during seeds and seedlings development. This is Sterol carrier protein 2 from Arabidopsis thaliana (Mouse-ear cress).